Reading from the N-terminus, the 568-residue chain is CRISPR-associated exonuclease Cas4/endonuclease Cas1 fusion (568 aa).

Residues 1-209 (MSVVVTRYRG…KCSLAPVCLP (209 aa)) are CRISPR-associated exonuclease Cas4. Cys-43 contacts [4Fe-4S] cluster. Mn(2+) is bound by residues Asp-95 and Glu-108. Positions 198, 201, and 207 each coordinate [4Fe-4S] cluster. The CRISPR-associated endonuclease Cas1 stretch occupies residues 232 to 568 (VLHVATPGTR…PGLFATFRLR (337 aa)). Residues Glu-390, His-459, and Glu-474 each contribute to the Mn(2+) site.

It in the N-terminal section; belongs to the CRISPR-associated exonuclease Cas4 family. In the C-terminal section; belongs to the CRISPR-associated endonuclease Cas1 family. Homodimer, forms a heterotetramer with a Cas2 homodimer. The cofactor is [4Fe-4S] cluster. Mg(2+) serves as cofactor. Requires Mn(2+) as cofactor.

It carries out the reaction exonucleolytic cleavage in the 5'- to 3'-direction to yield nucleoside 3'-phosphates.. In terms of biological role, CRISPR (clustered regularly interspaced short palindromic repeat), is an adaptive immune system that provides protection against mobile genetic elements (viruses, transposable elements and conjugative plasmids). CRISPR clusters contain spacers, sequences complementary to antecedent mobile elements, and target invading nucleic acids. CRISPR clusters are transcribed and processed into CRISPR RNA (crRNA). The Cas4 region acts as a ssDNA exonuclease, while the Cas1 region acts as a dsDNA endonuclease. Involved in the integration of spacer DNA into the CRISPR cassette. The sequence is that of CRISPR-associated exonuclease Cas4/endonuclease Cas1 fusion (cas4-cas1) from Myxococcus xanthus (strain DK1622).